The following is a 237-amino-acid chain: Ribosomal RNA small subunit methyltransferase G (237 aa).

Residues Gly-78, Phe-83, 129–130 (AE), and Arg-146 each bind S-adenosyl-L-methionine.

Belongs to the methyltransferase superfamily. RNA methyltransferase RsmG family.

It is found in the cytoplasm. In terms of biological role, specifically methylates the N7 position of a guanine in 16S rRNA. This is Ribosomal RNA small subunit methyltransferase G from Mesoplasma florum (strain ATCC 33453 / NBRC 100688 / NCTC 11704 / L1) (Acholeplasma florum).